The chain runs to 120 residues: Large ribosomal subunit protein uL18 (120 aa).

The protein belongs to the universal ribosomal protein uL18 family. In terms of assembly, part of the 50S ribosomal subunit; part of the 5S rRNA/L5/L18/L25 subcomplex. Contacts the 5S and 23S rRNAs.

Functionally, this is one of the proteins that bind and probably mediate the attachment of the 5S RNA into the large ribosomal subunit, where it forms part of the central protuberance. The sequence is that of Large ribosomal subunit protein uL18 from Acidiphilium cryptum (strain JF-5).